We begin with the raw amino-acid sequence, 425 residues long: Adenylosuccinate synthetase (425 aa).

GTP is bound by residues 12–18 and 40–42; these read GDEGKGK and GHT. The active-site Proton acceptor is Asp-13. Mg(2+) is bound by residues Asp-13 and Gly-40. IMP is bound by residues 13-16, 38-41, Thr-127, Arg-141, Gln-222, Thr-237, and Arg-301; these read DEGK and NAGH. His-41 functions as the Proton donor in the catalytic mechanism. 297-303 contributes to the substrate binding site; the sequence is AVTGRPR. GTP is bound by residues Arg-303, 329–331, and 411–413; these read KID and SVG.

Belongs to the adenylosuccinate synthetase family. In terms of assembly, homodimer. Mg(2+) serves as cofactor.

It is found in the cytoplasm. It carries out the reaction IMP + L-aspartate + GTP = N(6)-(1,2-dicarboxyethyl)-AMP + GDP + phosphate + 2 H(+). Its pathway is purine metabolism; AMP biosynthesis via de novo pathway; AMP from IMP: step 1/2. In terms of biological role, plays an important role in the de novo pathway of purine nucleotide biosynthesis. Catalyzes the first committed step in the biosynthesis of AMP from IMP. The chain is Adenylosuccinate synthetase from Fusobacterium nucleatum subsp. nucleatum (strain ATCC 25586 / DSM 15643 / BCRC 10681 / CIP 101130 / JCM 8532 / KCTC 2640 / LMG 13131 / VPI 4355).